The following is a 168-amino-acid chain: Photosystem I assembly protein Ycf3 (168 aa).

3 TPR repeats span residues 35 to 68, 72 to 105, and 120 to 153; these read AFAYYINGMSAQSEGNYAEALQNYYQAMHLEMDP, SYILYNIGIIHTSNGEHSKALEYYCRAIERNPFL, and GEQAIQQGDSEIAEAWFDQAAEYWKQARTLTPDN.

The protein belongs to the Ycf3 family.

The protein localises to the plastid membrane. Essential for the assembly of the photosystem I (PSI) complex. May act as a chaperone-like factor to guide the assembly of the PSI subunits. The polypeptide is Photosystem I assembly protein Ycf3 (Cuscuta obtusiflora (Peruvian dodder)).